A 492-amino-acid polypeptide reads, in one-letter code: Katanin p60 ATPase-containing subunit A1 (492 aa).

Residues 80 to 186 form a disordered region; sequence STPPKASQQE…ESEPKKFDST (107 aa). Residues 145–171 are compositionally biased toward basic and acidic residues; it reads PNDKGKAVRGREKKDQQNKGKEEKSKS. 250–257 contacts ATP; that stretch reads GPPGTGKT.

Belongs to the AAA ATPase family. Katanin p60 subunit A1 subfamily. As to quaternary structure, can homooligomerize into hexameric rings, which may be promoted by interaction with microtubules. Interacts with KATNB1, which may serve as a targeting subunit.

It localises to the cytoplasm. Its subcellular location is the cytoskeleton. It is found in the microtubule organizing center. The protein resides in the centrosome. The protein localises to the spindle pole. It localises to the spindle. It carries out the reaction n ATP + n H2O + a microtubule = n ADP + n phosphate + (n+1) alpha/beta tubulin heterodimers.. Its activity is regulated as follows. ATPase activity is stimulated by microtubules, which promote homooligomerization. ATP-dependent microtubule severing is stimulated by interaction with KATNB1. Catalytic subunit of a complex which severs microtubules in an ATP-dependent manner. Microtubule severing may promote rapid reorganization of cellular microtubule arrays and the release of microtubules from the centrosome following nucleation. The protein is Katanin p60 ATPase-containing subunit A1 of Gallus gallus (Chicken).